The following is a 252-amino-acid chain: Uridylate kinase (252 aa).

23 to 26 is an ATP binding site; sequence KLSG. Gly-65 contributes to the UMP binding site. ATP contacts are provided by Gly-66 and Arg-70. UMP contacts are provided by residues Asp-85 and 146–153; that span reads LGAPFFST. ATP-binding residues include Thr-173, Gln-174, Tyr-179, and Asp-182.

This sequence belongs to the UMP kinase family. Homohexamer.

The protein localises to the cytoplasm. The catalysed reaction is UMP + ATP = UDP + ADP. It participates in pyrimidine metabolism; CTP biosynthesis via de novo pathway; UDP from UMP (UMPK route): step 1/1. Inhibited by UTP. In terms of biological role, catalyzes the reversible phosphorylation of UMP to UDP. In Thermobifida fusca (strain YX), this protein is Uridylate kinase.